A 250-amino-acid polypeptide reads, in one-letter code: 1-(5-phosphoribosyl)-5-[(5-phosphoribosylamino)methylideneamino] imidazole-4-carboxamide isomerase (250 aa).

Residue Asp12 is the Proton acceptor of the active site. The Proton donor role is filled by Asp134.

This sequence belongs to the HisA/HisF family.

It is found in the cytoplasm. It carries out the reaction 1-(5-phospho-beta-D-ribosyl)-5-[(5-phospho-beta-D-ribosylamino)methylideneamino]imidazole-4-carboxamide = 5-[(5-phospho-1-deoxy-D-ribulos-1-ylimino)methylamino]-1-(5-phospho-beta-D-ribosyl)imidazole-4-carboxamide. It functions in the pathway amino-acid biosynthesis; L-histidine biosynthesis; L-histidine from 5-phospho-alpha-D-ribose 1-diphosphate: step 4/9. The protein is 1-(5-phosphoribosyl)-5-[(5-phosphoribosylamino)methylideneamino] imidazole-4-carboxamide isomerase of Actinobacillus pleuropneumoniae serotype 3 (strain JL03).